Here is a 293-residue protein sequence, read N- to C-terminus: MPPKLYHPQPTHAIPVSNMRVNTRYEPTAGFSGTSVPSVQAANPSAYLPNSATAQMGFQLGKNAVNAGQEYVEQNFGKWLSTTRLHHYFTVTNSYVVAKLLLIIFPWRRRSWARKLRRSEINGSAEGYCPPAEDLNSPDMYIPLMAFTTHILLLCALAGLQDDFQPELFGLRASKACAVVLVEFLATRLGCYLLNISSQSQVLDLLAFSGYKFVGLILTSLSKLFEMPWVTRFVFLYMYLATAFFLLRSLKYAVLPESTMAINATITSHQRSRRIYFLFFIAASQILFMYVLS.

Over 1–139 the chain is Cytoplasmic; sequence MPPKLYHPQP…PPAEDLNSPD (139 aa). A helical membrane pass occupies residues 140-160; that stretch reads MYIPLMAFTTHILLLCALAGL. The Lumenal segment spans residues 161–175; the sequence is QDDFQPELFGLRASK. A helical transmembrane segment spans residues 176–196; that stretch reads ACAVVLVEFLATRLGCYLLNI. Topologically, residues 197–201 are cytoplasmic; the sequence is SSQSQ. A helical membrane pass occupies residues 202-222; it reads VLDLLAFSGYKFVGLILTSLS. At 223 to 226 the chain is on the lumenal side; sequence KLFE. The chain crosses the membrane as a helical span at residues 227–247; that stretch reads MPWVTRFVFLYMYLATAFFLL. Residues 248–271 are Cytoplasmic-facing; it reads RSLKYAVLPESTMAINATITSHQR. Residues 272-292 form a helical membrane-spanning segment; it reads SRRIYFLFFIAASQILFMYVL. Residue Ser-293 is a topological domain, lumenal.

Belongs to the YIF1 family. In terms of assembly, component of the yip1-yif1 complex, composed of at least yif1, yip1 and yos1. The complex interacts with the ER to Golgi SNAREs bos1 and sec22.

It localises to the endoplasmic reticulum membrane. The protein localises to the golgi apparatus membrane. The protein resides in the cytoplasmic vesicle. Its subcellular location is the COPII-coated vesicle. In terms of biological role, required for fusion of ER-derived vesicles with the Golgi during ER-to-Golgi protein transport. May be involved in proper membrane localization of Rab GTPases. This is Protein transport protein yif1 from Schizosaccharomyces pombe (strain 972 / ATCC 24843) (Fission yeast).